The chain runs to 377 residues: G-protein coupled receptor 54 (377 aa).

Residues 1–49 are Extracellular-facing; the sequence is MYSSEELWNSTEQVWINGSGTNFSLGRHEDDEEEEGDKHPFFTDAWLVP. 3 N-linked (GlcNAc...) asparagine glycosylation sites follow: N9, N17, and N22. Residues 50–70 traverse the membrane as a helical segment; it reads LFFSLIMLVGLVGNSLVIYVI. Residues 71-91 lie on the Cytoplasmic side of the membrane; sequence SKHRQMRTATNFYIANLAATD. A helical membrane pass occupies residues 92 to 112; it reads IIFLVCCVPFTATLYPLPGWI. Residues 113–119 lie on the Extracellular side of the membrane; it reads FGNFMCK. C118 and C198 are joined by a disulfide. Residues 120–140 form a helical membrane-spanning segment; it reads FVAFLQQVTVQATCITLTAMS. The Cytoplasmic segment spans residues 141–160; sequence GDRCYVTVYPLKSLRHRTPK. The helical transmembrane segment at 161–181 threads the bilayer; the sequence is VAMIVSICIWIGSFVLSTPIL. The Extracellular segment spans residues 182 to 209; that stretch reads MYQRIEEGYWYGPRQYCMERFPSKTHER. A helical transmembrane segment spans residues 210–230; it reads AFILYQFIAAYLLPVLTISFC. At 231–269 the chain is on the cytoplasmic side; it reads YTLMVKRVGQPTVEPVDNNYQVNLLSERTISIRSKVSKM. Residues 270–290 form a helical membrane-spanning segment; sequence VVVIVLLFAICWGPIQIFVLF. Topologically, residues 291–305 are extracellular; sequence QSFYPNYQPNYATYK. The helical transmembrane segment at 306 to 328 threads the bilayer; the sequence is IKTWANCMSYANSSVNPIVYGFM. Residues 329-377 are Cytoplasmic-facing; sequence GASFQKSFRKTFPFLFKHKVRDSSMASRTANAEIKFVAAEEGNNNNAVN.

It belongs to the G-protein coupled receptor 1 family. As to expression, expressed in a significantly high percentage (45-60%) of mature GnRH1, GnRH2, and GnRH3 neurons and in immature GnRH3 neurons, which had migrated to the vicinity of their final locations in the brain. Only 5% of immature GnRH1 and GnRH2 neurons have receptor transcripts.

It is found in the cell membrane. In terms of biological role, receptor speculated to be essential for sexual development. May regulate gonadotropin-releasing hormone (GnRH) secretion. The receptor expression could be a 'stop signal' for GnRH1, GnRH2, and GnRH3 neuronal migration, leading to suppression of cell growth and modulation of GnRH secretion, which is important for normal sexual development. The protein is G-protein coupled receptor 54 (gpr54) of Oreochromis niloticus (Nile tilapia).